We begin with the raw amino-acid sequence, 429 residues long: Methylenetetrahydrofolate--tRNA-(uracil-5-)-methyltransferase TrmFO (429 aa).

7 to 12 (GAGLAG) provides a ligand contact to FAD.

It belongs to the MnmG family. TrmFO subfamily. It depends on FAD as a cofactor.

It is found in the cytoplasm. The enzyme catalyses uridine(54) in tRNA + (6R)-5,10-methylene-5,6,7,8-tetrahydrofolate + NADH + H(+) = 5-methyluridine(54) in tRNA + (6S)-5,6,7,8-tetrahydrofolate + NAD(+). It catalyses the reaction uridine(54) in tRNA + (6R)-5,10-methylene-5,6,7,8-tetrahydrofolate + NADPH + H(+) = 5-methyluridine(54) in tRNA + (6S)-5,6,7,8-tetrahydrofolate + NADP(+). Catalyzes the folate-dependent formation of 5-methyl-uridine at position 54 (M-5-U54) in all tRNAs. This chain is Methylenetetrahydrofolate--tRNA-(uracil-5-)-methyltransferase TrmFO, found in Thermosipho melanesiensis (strain DSM 12029 / CIP 104789 / BI429).